We begin with the raw amino-acid sequence, 251 residues long: D-aminoacyl-tRNA deacylase (251 aa).

This sequence belongs to the DtdA deacylase family. In terms of assembly, monomer. Requires Zn(2+) as cofactor.

The catalysed reaction is a D-aminoacyl-tRNA + H2O = a tRNA + a D-alpha-amino acid + H(+). It catalyses the reaction glycyl-tRNA(Ala) + H2O = tRNA(Ala) + glycine + H(+). Functionally, D-aminoacyl-tRNA deacylase with broad substrate specificity. By recycling D-aminoacyl-tRNA to D-amino acids and free tRNA molecules, this enzyme counteracts the toxicity associated with the formation of D-aminoacyl-tRNA entities in vivo. This chain is D-aminoacyl-tRNA deacylase, found in Pyrobaculum aerophilum (strain ATCC 51768 / DSM 7523 / JCM 9630 / CIP 104966 / NBRC 100827 / IM2).